The sequence spans 450 residues: Phosphoglucosamine mutase (450 aa).

The active-site Phosphoserine intermediate is the Ser-101. The Mg(2+) site is built by Ser-101, Asp-242, Asp-244, and Asp-246. Ser-101 is modified (phosphoserine).

Belongs to the phosphohexose mutase family. Mg(2+) is required as a cofactor. In terms of processing, activated by phosphorylation.

The catalysed reaction is alpha-D-glucosamine 1-phosphate = D-glucosamine 6-phosphate. In terms of biological role, catalyzes the conversion of glucosamine-6-phosphate to glucosamine-1-phosphate. In Rhodopseudomonas palustris (strain TIE-1), this protein is Phosphoglucosamine mutase.